Reading from the N-terminus, the 135-residue chain is Protein PsiE homolog (135 aa).

The next 4 helical transmembrane spans lie at 20–40 (VGLL…TIHL), 54–74 (YLLI…ALIV), 82–102 (HFPL…LIIV), and 107–127 (PIDT…LYLA).

This sequence belongs to the PsiE family.

The protein localises to the cell inner membrane. This Serratia proteamaculans (strain 568) protein is Protein PsiE homolog.